The chain runs to 310 residues: Phosphoribosylaminoimidazole-succinocarboxamide synthase (310 aa).

It belongs to the SAICAR synthetase family.

It catalyses the reaction 5-amino-1-(5-phospho-D-ribosyl)imidazole-4-carboxylate + L-aspartate + ATP = (2S)-2-[5-amino-1-(5-phospho-beta-D-ribosyl)imidazole-4-carboxamido]succinate + ADP + phosphate + 2 H(+). It participates in purine metabolism; IMP biosynthesis via de novo pathway; 5-amino-1-(5-phospho-D-ribosyl)imidazole-4-carboxamide from 5-amino-1-(5-phospho-D-ribosyl)imidazole-4-carboxylate: step 1/2. This is Phosphoribosylaminoimidazole-succinocarboxamide synthase from Dechloromonas aromatica (strain RCB).